The primary structure comprises 665 residues: Long chain acyl-CoA synthetase 3 (665 aa).

Ile-228–Lys-239 lines the ATP pocket. Residues Asp-495–Lys-519 form a fatty acid-binding region.

It belongs to the ATP-dependent AMP-binding enzyme family. The cofactor is Mg(2+).

It catalyses the reaction a long-chain fatty acid + ATP + CoA = a long-chain fatty acyl-CoA + AMP + diphosphate. It functions in the pathway lipid metabolism; fatty acid metabolism. In terms of biological role, activation of long-chain fatty acids for both synthesis of cellular lipids, and degradation via beta-oxidation. Preferentially uses palmitate, palmitoleate, oleate and linoleate. This chain is Long chain acyl-CoA synthetase 3 (LACS3), found in Arabidopsis thaliana (Mouse-ear cress).